A 34-amino-acid chain; its full sequence is Photosystem II reaction center protein Psb30 (34 aa).

The chain crosses the membrane as a helical span at residues 7 to 27; the sequence is VAQLISLFLILTSGPAIIVLI.

The protein belongs to the Psb30/Ycf12 family. PSII is composed of 1 copy each of membrane proteins PsbA, PsbB, PsbC, PsbD, PsbE, PsbF, PsbH, PsbI, PsbJ, PsbK, PsbL, PsbM, PsbT, PsbX, PsbY, PsbZ, Psb30/Ycf12, peripheral proteins of the oxygen-evolving complex and a large number of cofactors. It forms dimeric complexes.

It is found in the plastid. The protein localises to the chloroplast thylakoid membrane. A core subunit of photosystem II (PSII), probably helps stabilize the reaction center. This Rhodomonas salina (Cryptomonas salina) protein is Photosystem II reaction center protein Psb30.